The chain runs to 239 residues: Endoglucanase A (239 aa).

A signal peptide spans 1 to 16 (MKLSMTLSLFAATAMG).

It belongs to the glycosyl hydrolase 12 (cellulase H) family.

The enzyme catalyses Endohydrolysis of (1-&gt;4)-beta-D-glucosidic linkages in cellulose, lichenin and cereal beta-D-glucans.. Has carboxylmethylcellulase activity. In Aspergillus kawachii (strain NBRC 4308) (White koji mold), this protein is Endoglucanase A (cekA).